A 146-amino-acid chain; its full sequence is Large ribosomal subunit protein uL15 (146 aa).

Residues M1–P10 are compositionally biased toward basic and acidic residues. Positions M1–A41 are disordered.

This sequence belongs to the universal ribosomal protein uL15 family. Part of the 50S ribosomal subunit.

Binds to the 23S rRNA. This Mycobacterium tuberculosis (strain ATCC 25177 / H37Ra) protein is Large ribosomal subunit protein uL15.